The chain runs to 498 residues: Glutathione synthetase large chain (498 aa).

A substrate-binding site is contributed by Arg-128. Glu-146 is an ATP binding site. 2 residues coordinate Mg(2+): Glu-146 and Asn-148. Residues 150–153, 233–235, Gln-239, and 291–294 each bind substrate; these read ISVS, ERN, and RVGY. Lys-330 is an ATP binding site. At Ser-356 the chain carries Phosphoserine. ATP is bound by residues 387-396, Tyr-398, 420-423, and Glu-446; these read KPQREGGGNN and MRYI. Glu-391 lines the Mg(2+) pocket. Arg-473 contributes to the substrate binding site. Residues Lys-475 and Glu-481 each contribute to the ATP site. 484–485 is a substrate binding site; it reads VA.

Belongs to the eukaryotic GSH synthase family. In terms of assembly, heterodimer composed of a large and a small chain. Mg(2+) serves as cofactor.

It carries out the reaction gamma-L-glutamyl-L-cysteine + glycine + ATP = glutathione + ADP + phosphate + H(+). It participates in sulfur metabolism; glutathione biosynthesis; glutathione from L-cysteine and L-glutamate: step 2/2. This Schizosaccharomyces pombe (strain 972 / ATCC 24843) (Fission yeast) protein is Glutathione synthetase large chain (gsa1).